Here is a 307-residue protein sequence, read N- to C-terminus: Acetaldehyde dehydrogenase 2 (307 aa).

The Acyl-thioester intermediate role is filled by Cys-131. NAD(+) is bound by residues 162 to 170 (SVGPGTRKN) and Asn-273.

Belongs to the acetaldehyde dehydrogenase family.

The enzyme catalyses acetaldehyde + NAD(+) + CoA = acetyl-CoA + NADH + H(+). The polypeptide is Acetaldehyde dehydrogenase 2 (aphF) (Comamonas testosteroni (Pseudomonas testosteroni)).